Here is a 65-residue protein sequence, read N- to C-terminus: Small ribosomal subunit protein bS21 (65 aa).

Belongs to the bacterial ribosomal protein bS21 family.

The protein is Small ribosomal subunit protein bS21 of Thermodesulfovibrio yellowstonii (strain ATCC 51303 / DSM 11347 / YP87).